Consider the following 539-residue polypeptide: Propionyl-CoA carboxylase beta chain, mitochondrial (539 aa).

Residues 1–28 constitute a mitochondrion transit peptide; the sequence is MAAALRVAAVGARLSVLASGLRAAVRSL. The CoA carboxyltransferase N-terminal domain maps to 32–290; the sequence is ATSVNERIEN…SSQDPAPVRE (259 aa). The carboxyltransferase stretch occupies residues 32-533; sequence ATSVNERIEN…SKKVQRPWRK (502 aa). Serine 71 is subject to Phosphoserine. Lysine 99 carries the N6-acetyllysine; alternate modification. Lysine 99 is subject to N6-succinyllysine; alternate. Position 248 is an N6-succinyllysine (lysine 248). The region spanning 294–533 is the CoA carboxyltransferase C-terminal domain; sequence PSDRLVPELD…SKKVQRPWRK (240 aa). The tract at residues 325–358 is acyl-CoA binding; sequence DEREFFEIMPNYAKNIIVGFARMNGRTVGIVGNQ. Residues lysine 474 and lysine 489 each carry the N6-acetyllysine; alternate modification. 2 positions are modified to N6-succinyllysine; alternate: lysine 474 and lysine 489.

It belongs to the AccD/PCCB family. The holoenzyme is a dodecamer composed of 6 PCCA/alpha subunits and 6 PCCB/beta subunits.

The protein resides in the mitochondrion matrix. It catalyses the reaction propanoyl-CoA + hydrogencarbonate + ATP = (S)-methylmalonyl-CoA + ADP + phosphate + H(+). The catalysed reaction is butanoyl-CoA + hydrogencarbonate + ATP = (2S)-ethylmalonyl-CoA + ADP + phosphate + H(+). The protein operates within metabolic intermediate metabolism; propanoyl-CoA degradation; succinyl-CoA from propanoyl-CoA: step 1/3. Functionally, this is one of the 2 subunits of the biotin-dependent propionyl-CoA carboxylase (PCC), a mitochondrial enzyme involved in the catabolism of odd chain fatty acids, branched-chain amino acids isoleucine, threonine, methionine, and valine and other metabolites. Propionyl-CoA carboxylase catalyzes the carboxylation of propionyl-CoA/propanoyl-CoA to D-methylmalonyl-CoA/(S)-methylmalonyl-CoA. Within the holoenzyme, the alpha subunit catalyzes the ATP-dependent carboxylation of the biotin carried by the biotin carboxyl carrier (BCC) domain, while the beta subunit then transfers the carboxyl group from carboxylated biotin to propionyl-CoA. Propionyl-CoA carboxylase also significantly acts on butyryl-CoA/butanoyl-CoA, which is converted to ethylmalonyl-CoA/(2S)-ethylmalonyl-CoA at a much lower rate. Other alternative minor substrates include (2E)-butenoyl-CoA/crotonoyl-CoA. The polypeptide is Propionyl-CoA carboxylase beta chain, mitochondrial (Homo sapiens (Human)).